Here is an 816-residue protein sequence, read N- to C-terminus: Neuroligin-4, X-linked (816 aa).

An N-terminal signal peptide occupies residues 1–41; sequence MSRPQGLLWLPLLFTPVCVMLNSNVLLWLTALAIKFTLIDS. The Extracellular segment spans residues 42–676; it reads QAQYPVVNTN…TKRDYSTELS (635 aa). Asn-102 is a glycosylation site (N-linked (GlcNAc...) asparagine). 2 cysteine pairs are disulfide-bonded: Cys-110–Cys-146 and Cys-306–Cys-317. Positions 359-364 are interaction with NRXN1; the sequence is QGEFLN. Cys-476 and Cys-510 are disulfide-bonded. N-linked (GlcNAc...) asparagine glycosylation is present at Asn-511. Residues 636-659 form a disordered region; sequence TKRPAITPANNPKHSKDPHKTGPE. The span at 649 to 658 shows a compositional bias: basic and acidic residues; the sequence is HSKDPHKTGP. A helical transmembrane segment spans residues 677–697; that stretch reads VTIAVGASLLFLNILAFAALY. Topologically, residues 698-816 are cytoplasmic; sequence YKKDKRRHET…LPHGHSTTRV (119 aa). Ser-712 bears the Phosphoserine mark.

Belongs to the type-B carboxylesterase/lipase family. As to quaternary structure, homodimer. Interacts with NRXN1 in a calcium-dependent manner. Interaction with neurexins is mediated by heparan sulfate glycan modification on neurexin. Interacts through its C-terminus with DLG4/PSD-95 third PDZ domain. As to expression, expressed at highest levels in heart. Expressed at lower levels in liver, skeletal muscle and pancreas and at very low levels in brain.

The protein resides in the cell membrane. It is found in the postsynaptic density membrane. Cell surface protein involved in cell-cell-interactions via its interactions with neurexin family members. The chain is Neuroligin-4, X-linked (NLGN4X) from Homo sapiens (Human).